A 269-amino-acid polypeptide reads, in one-letter code: 4-hydroxy-tetrahydrodipicolinate reductase (269 aa).

Residues 8 to 13 (GAAGRM) and E34 each bind NAD(+). Position 35 (R35) interacts with NADP(+). NAD(+) contacts are provided by residues 98 to 100 (GTT) and 122 to 125 (APNY). The active-site Proton donor/acceptor is the H155. Position 156 (H156) interacts with (S)-2,3,4,5-tetrahydrodipicolinate. K159 functions as the Proton donor in the catalytic mechanism. 165–166 (GT) contributes to the (S)-2,3,4,5-tetrahydrodipicolinate binding site.

It belongs to the DapB family.

It localises to the cytoplasm. It carries out the reaction (S)-2,3,4,5-tetrahydrodipicolinate + NAD(+) + H2O = (2S,4S)-4-hydroxy-2,3,4,5-tetrahydrodipicolinate + NADH + H(+). The catalysed reaction is (S)-2,3,4,5-tetrahydrodipicolinate + NADP(+) + H2O = (2S,4S)-4-hydroxy-2,3,4,5-tetrahydrodipicolinate + NADPH + H(+). The protein operates within amino-acid biosynthesis; L-lysine biosynthesis via DAP pathway; (S)-tetrahydrodipicolinate from L-aspartate: step 4/4. Catalyzes the conversion of 4-hydroxy-tetrahydrodipicolinate (HTPA) to tetrahydrodipicolinate. The polypeptide is 4-hydroxy-tetrahydrodipicolinate reductase (Vibrio cholerae serotype O1 (strain ATCC 39315 / El Tor Inaba N16961)).